Here is a 645-residue protein sequence, read N- to C-terminus: Cysteine-rich receptor-like protein kinase 19 (645 aa).

Positions 1–20 (MSSLISFIFLFLFSSITASA) are cleaved as a signal peptide. The Extracellular segment spans residues 21–262 (QNTFYLYHNC…PRPGKGGNSS (242 aa)). Gnk2-homologous domains lie at 24–129 (FYLY…NRNI) and 135–239 (TDGG…NYAF). Asn-29, Asn-39, Asn-57, Asn-101, Asn-185, Asn-241, and Asn-260 each carry an N-linked (GlcNAc...) asparagine glycan. A helical transmembrane segment spans residues 263 to 283 (VIIIAVVVPITVLFLLLVAVF). Topologically, residues 284–645 (SVRAKNKRTL…EASITRVTPR (362 aa)) are cytoplasmic. In terms of domain architecture, Protein kinase spans 326–603 (FLPINKLGQG…IVQMLTTSLI (278 aa)). ATP-binding positions include 332–340 (LGQGGFGEV) and Lys-354. Tyr-399 bears the Phosphotyrosine mark. The Proton acceptor role is filled by Asp-451. Thr-491 is modified (phosphothreonine). A Phosphotyrosine modification is found at Tyr-499. The segment at 616 to 645 (RSKQEQAGPSIDSSTHCSVDEASITRVTPR) is disordered. The segment covering 620–632 (EQAGPSIDSSTHC) has biased composition (polar residues).

Belongs to the protein kinase superfamily. Ser/Thr protein kinase family. CRK subfamily. As to quaternary structure, interacts with MWL1.

It localises to the membrane. The catalysed reaction is L-seryl-[protein] + ATP = O-phospho-L-seryl-[protein] + ADP + H(+). It carries out the reaction L-threonyl-[protein] + ATP = O-phospho-L-threonyl-[protein] + ADP + H(+). This chain is Cysteine-rich receptor-like protein kinase 19 (CRK19), found in Arabidopsis thaliana (Mouse-ear cress).